Reading from the N-terminus, the 213-residue chain is High frequency lysogenization protein HflD homolog (213 aa).

It belongs to the HflD family.

It is found in the cytoplasm. The protein localises to the cell inner membrane. This Klebsiella pneumoniae (strain 342) protein is High frequency lysogenization protein HflD homolog.